The primary structure comprises 417 residues: Acetate kinase (417 aa).

Position 9 (N9) interacts with Mg(2+). K16 contacts ATP. R90 serves as a coordination point for substrate. The Proton donor/acceptor role is filled by D147. ATP-binding positions include 207-211, 282-284, and 330-334; these read HIGNG, DLR, and GIGEN. E384 provides a ligand contact to Mg(2+).

This sequence belongs to the acetokinase family. Homodimer. It depends on Mg(2+) as a cofactor. The cofactor is Mn(2+).

It localises to the cytoplasm. The catalysed reaction is acetate + ATP = acetyl phosphate + ADP. It functions in the pathway metabolic intermediate biosynthesis; acetyl-CoA biosynthesis; acetyl-CoA from acetate: step 1/2. In terms of biological role, catalyzes the formation of acetyl phosphate from acetate and ATP. Can also catalyze the reverse reaction. The chain is Acetate kinase from Staphylococcus epidermidis (strain ATCC 35984 / DSM 28319 / BCRC 17069 / CCUG 31568 / BM 3577 / RP62A).